The chain runs to 308 residues: Mitochondrial brown fat uncoupling protein 1 (308 aa).

Residues 1–10 lie on the Mitochondrial intermembrane side of the membrane; sequence MVASAEADVP. The chain crosses the membrane as a helical span at residues 11 to 33; the sequence is PPTMLVKIASAGLSACLADIITF. Solcar repeat units follow at residues 11–103, 112–202, and 211–296; these read PPTM…VQEY, ATLG…LKEA, and DDIP…LKKE. The Mitochondrial matrix portion of the chain corresponds to 34 to 74; that stretch reads PLDTAKVRLQVQGERPNAPGVKYKGVLGTIATVAKTEGPLK. K57 provides a ligand contact to fatty acid 16:0. Residues 75 to 97 traverse the membrane as a helical segment; that stretch reads LYGGLPAGIQRQISFASLRIGLY. The Mitochondrial intermembrane segment spans residues 98–117; sequence DTVQEYFNAHRKTPATLGNK. Residues 118–134 traverse the membrane as a helical segment; sequence ISAGLMTGCVTVFIGQP. Residues 135–179 lie on the Mitochondrial matrix side of the membrane; the sequence is TEVAKVRMQAQSSLHWLKPRYSGTYNAYYVIVKTEGFLGLWKGTS. Residues 180 to 196 traverse the membrane as a helical segment; that stretch reads LNLTRNVIINCTELVVY. The Mitochondrial intermembrane segment spans residues 197–213; sequence DVLKEALVKNNVLADDI. Residues 214 to 233 traverse the membrane as a helical segment; that stretch reads PCHLLAALTAGFCTTALASP. The Mitochondrial matrix portion of the chain corresponds to 234–267; sequence VDVVKTRFINSPPGYYPHVHNCALNMLQKEGLRA. C255 bears the Cysteine sulfenic acid (-SOH) mark. The chain crosses the membrane as a helical span at residues 268 to 290; that stretch reads FFKGFVPSFLRLGSWTVIMHVTF. Fatty acid 16:0 is bound at residue K270. Residues 291 to 308 are Mitochondrial intermembrane-facing; the sequence is EQLKKELMKSRQTVDCAT.

This sequence belongs to the mitochondrial carrier (TC 2.A.29) family. Most probably functions as a monomer. Binds one purine nucleotide per monomer. However, has also been suggested to function as a homodimer or a homotetramer. Tightly associates with cardiolipin in the mitochondrion inner membrane; may stabilize and regulate its activity. May undergo sulfenylation upon cold exposure. May increase the sensitivity of UCP1 thermogenic function to the activation by noradrenaline probably through structural effects. In terms of processing, may undergo ubiquitin-mediated proteasomal degradation. In terms of tissue distribution, brown adipose tissue.

Its subcellular location is the mitochondrion inner membrane. It catalyses the reaction H(+)(in) = H(+)(out). Its activity is regulated as follows. Has no constitutive proton transporter activity and has to be activated by long-chain fatty acids/LCFAs. Inhibited by purine nucleotides. Both purine nucleotides and LCFAs bind the cytosolic side of the transporter and directly compete to activate or inhibit it. Activated by noradrenaline and reactive oxygen species. Despite lacking canonical translational encoding for selenocysteine, a small pool of the protein has been observed to selectively incorporate selenocysteine at 'Cys-255'. Selenocysteine-modified protein is highly sensitive to redox modification and may constitute a pool of protein highly sensitive to activation by elevated levels of reactive oxygen species (ROS). Its function is as follows. Mitochondrial protein responsible for thermogenic respiration, a specialized capacity of brown adipose tissue and beige fat that participates in non-shivering adaptive thermogenesis to temperature and diet variations and more generally to the regulation of energy balance. Functions as a long-chain fatty acid/LCFA and proton symporter, simultaneously transporting one LCFA and one proton through the inner mitochondrial membrane. However, LCFAs remaining associated with the transporter via their hydrophobic tails, it results in an apparent transport of protons activated by LCFAs. Thereby, dissipates the mitochondrial proton gradient and converts the energy of substrate oxydation into heat instead of ATP. Regulates the production of reactive oxygen species/ROS by mitochondria. The sequence is that of Mitochondrial brown fat uncoupling protein 1 from Suncus murinus (Asian house shrew).